Reading from the N-terminus, the 182-residue chain is uncharacterized protein (182 aa).

Residues 17-34 form a helical membrane-spanning segment; the sequence is LSLVLFAVLSVLPLGGCA. TPR repeat units lie at residues 89 to 122 and 123 to 156; these read VDAA…TPDN and LRAL…NPEN.

The protein resides in the membrane. This is an uncharacterized protein from Sinorhizobium fredii (strain NBRC 101917 / NGR234).